Reading from the N-terminus, the 524-residue chain is Cytochrome P450 704B1 (524 aa).

A helical membrane pass occupies residues 2–22; the sequence is SLCLVIACMVTSWIFLHRWGQ. Residue C471 participates in heme binding.

It belongs to the cytochrome P450 family. The cofactor is heme.

It localises to the membrane. The catalysed reaction is an omega-methyl-long-chain fatty acid + reduced [NADPH--hemoprotein reductase] + O2 = an omega-hydroxy-long-chain fatty acid + oxidized [NADPH--hemoprotein reductase] + H2O + H(+). Functionally, involved in pollen wall development. Catalyzes the conversion of long-chain fatty acids to the corresponding omega-hydroxylated fatty acids. Omega-hydroxylated fatty acids, together with in-chain hydroxylated fatty acids, are key monomeric aliphatic building blocks for sporopollenin synthesis during exine formation. The chain is Cytochrome P450 704B1 (CYP704B1) from Arabidopsis thaliana (Mouse-ear cress).